The chain runs to 77 residues: Thioredoxin (77 aa).

Residues Cys11 and Cys14 each act as nucleophile in the active site. A disulfide bond links Cys11 and Cys14.

It belongs to the glutaredoxin family.

Its function is as follows. Does not function as a glutathione-disulfide oxidoreductase in the presence of glutathione and glutathione reductase. Has low thioredoxin activity in vitro. This chain is Thioredoxin, found in Methanothermobacter thermautotrophicus (strain ATCC 29096 / DSM 1053 / JCM 10044 / NBRC 100330 / Delta H) (Methanobacterium thermoautotrophicum).